The primary structure comprises 294 residues: 4-hydroxy-tetrahydrodipicolinate synthase (294 aa).

Position 47 (Thr-47) interacts with pyruvate. Tyr-135 (proton donor/acceptor) is an active-site residue. Lys-163 serves as the catalytic Schiff-base intermediate with substrate. Ile-206 lines the pyruvate pocket.

The protein belongs to the DapA family. Homodimer.

The protein localises to the cytoplasm. The catalysed reaction is L-aspartate 4-semialdehyde + pyruvate = (2S,4S)-4-hydroxy-2,3,4,5-tetrahydrodipicolinate + H2O + H(+). The protein operates within amino-acid biosynthesis; L-lysine biosynthesis via DAP pathway; (S)-tetrahydrodipicolinate from L-aspartate: step 3/4. Its function is as follows. Catalyzes the condensation of (S)-aspartate-beta-semialdehyde [(S)-ASA] and pyruvate to 4-hydroxy-tetrahydrodipicolinate (HTPA). In Staphylococcus epidermidis (strain ATCC 35984 / DSM 28319 / BCRC 17069 / CCUG 31568 / BM 3577 / RP62A), this protein is 4-hydroxy-tetrahydrodipicolinate synthase.